The primary structure comprises 393 residues: DNA-directed RNA polymerase subunit Rpo1C (393 aa).

Belongs to the RNA polymerase beta' chain family. In terms of assembly, part of the 13-subunit RNA polymerase complex. Interacts with TFS4.

It localises to the cytoplasm. The enzyme catalyses RNA(n) + a ribonucleoside 5'-triphosphate = RNA(n+1) + diphosphate. In terms of biological role, DNA-dependent RNA polymerase (RNAP) catalyzes the transcription of DNA into RNA using the four ribonucleoside triphosphates as substrates. Forms part of the jaw domain. Functionally, reconstitution experiments show this subunit is required for basic activity. This is DNA-directed RNA polymerase subunit Rpo1C from Sulfolobus acidocaldarius (strain ATCC 33909 / DSM 639 / JCM 8929 / NBRC 15157 / NCIMB 11770).